The following is a 522-amino-acid chain: Flavin-dependent halogenase armH1 (522 aa).

3 residues coordinate FAD: Gly16, Ala19, and Glu49. The chloride site is built by Ser328 and Gly329. Residue Ile330 participates in FAD binding.

This sequence belongs to the flavin-dependent halogenase family.

The catalysed reaction is melleolide F + FADH2 + chloride + O2 = 6'-chloromelleolide F + FAD + 2 H2O + H(+). Its function is as follows. Flavin-dependent halogenase involved in the biosynthesis of melleolides, a range of antifungal and phytotoxic polyketide derivatives composed of an orsellinic acid (OA) moiety esterified to various sesquiterpene alcohols. The halogenase catalyzes the transfer of a single chlorine atom to the melleolide backbone, resulting in a 6'-chloromelleolide product. The enzyme acts on free substrate and does not depend on carrier-protein-dependent acceptor molecules. The polypeptide is Flavin-dependent halogenase armH1 (Armillaria mellea (Honey mushroom)).